We begin with the raw amino-acid sequence, 129 residues long: DFRCPTTWSASKLYCYKPFKEKKTWIEAERFCAKQAENGHLVSIGSAAEADFLDLVIVVNFDKQRYRAWTGLTERNLKWTNGASVSYENLYEPYIRKCFVVQPWEGKSKWYKADCEEKNAFLCKFPKPH.

One can recognise a C-type lectin domain in the interval 3-125; that stretch reads RCPTTWSASK…EEKNAFLCKF (123 aa). 3 disulfides stabilise this stretch: C4–C15, C32–C123, and C98–C115.

In terms of assembly, heterotetramer of subunit alpha, beta, gamma and delta; only the gamma and the delta subunits are disulfide-linked. Alpha-beta heterodimer and gamma-delta heterodimer associate orthogonally, giving a cruciform conformation. This heterotetramer may covalently dimerizes thanks to the gamma subunit. Expressed by the venom gland.

The protein resides in the secreted. In terms of biological role, potent inhibitor of collagen-induced platelet aggregation. It acts by binding to the integrin alpha2A domain and blocks collagen binding to integrin alpha-2/beta-1 (ITGA2/ITGB1). The gamma/delta subunits mainly contribute to this activity. This is Snaclec rhodocetin subunit beta from Calloselasma rhodostoma (Malayan pit viper).